The primary structure comprises 485 residues: GTPase Obg (485 aa).

The Obg domain occupies 2-159 (PRFVDRVVIH…RELTLELKTV (158 aa)). The 182-residue stretch at 160–341 (ADVGLIGFPS…FIFALWDMVR (182 aa)) folds into the OBG-type G domain. GTP is bound by residues 166-173 (GFPSAGKS), 191-195 (FTTLV), 212-215 (DVPG), 292-295 (NKID), and 322-324 (STV). Ser173 and Thr193 together coordinate Mg(2+). One can recognise an OCT domain in the interval 359–437 (PIAVDETGFS…IGDMTFDWEP (79 aa)). Residues 439–485 (TPAGVDVQMSGRGTDTRLEQTDRVSAAERKIARRERRQSTDEPGGEE) form a disordered region. Residues 452 to 468 (TDTRLEQTDRVSAAERK) are compositionally biased toward basic and acidic residues.

Belongs to the TRAFAC class OBG-HflX-like GTPase superfamily. OBG GTPase family. As to quaternary structure, monomer. Requires Mg(2+) as cofactor.

The protein localises to the cytoplasm. In terms of biological role, an essential GTPase which binds GTP, GDP and possibly (p)ppGpp with moderate affinity, with high nucleotide exchange rates and a fairly low GTP hydrolysis rate. Plays a role in control of the cell cycle, stress response, ribosome biogenesis and in those bacteria that undergo differentiation, in morphogenesis control. In Mycobacterium sp. (strain MCS), this protein is GTPase Obg.